We begin with the raw amino-acid sequence, 658 residues long: Glycogen debranching enzyme (658 aa).

Residue Asp-336 is the Nucleophile of the active site. Catalysis depends on Glu-371, which acts as the Proton donor. The tract at residues 459–486 (EANGEENRDGTNSNYSDNNGKEGLGGPL) is disordered.

The protein belongs to the glycosyl hydrolase 13 family.

The enzyme catalyses Hydrolysis of (1-&gt;6)-alpha-D-glucosidic linkages to branches with degrees of polymerization of three or four glucose residues in limit dextrin.. It functions in the pathway glycan degradation; glycogen degradation. Removes maltotriose and maltotetraose chains that are attached by 1,6-alpha-linkage to the limit dextrin main chain, generating a debranched limit dextrin. This Salmonella gallinarum (strain 287/91 / NCTC 13346) protein is Glycogen debranching enzyme.